We begin with the raw amino-acid sequence, 167 residues long: Cytochrome b6-f complex subunit 4 (167 aa).

The next 3 helical transmembrane spans lie at 36–56 (LLYISPVVILGTIACNVGLAV), 95–115 (LLGVLLMVLVPTGLLTVPFLE), and 131–151 (TVFLIGTAVALWLGIGATLPI).

Belongs to the cytochrome b family. PetD subfamily. The 4 large subunits of the cytochrome b6-f complex are cytochrome b6, subunit IV (17 kDa polypeptide, petD), cytochrome f and the Rieske protein, while the 4 small subunits are petG, petL, petM and petN. The complex functions as a dimer.

It is found in the plastid. The protein resides in the chloroplast thylakoid membrane. Its function is as follows. Component of the cytochrome b6-f complex, which mediates electron transfer between photosystem II (PSII) and photosystem I (PSI), cyclic electron flow around PSI, and state transitions. This is Cytochrome b6-f complex subunit 4 from Calycanthus floridus var. glaucus (Eastern sweetshrub).